A 258-amino-acid polypeptide reads, in one-letter code: Undecaprenyl-diphosphatase (258 aa).

Helical transmembrane passes span 1–21, 42–62, 71–91, 96–116, 134–154, 173–193, 211–231, and 237–257; these read MSII…FLPV, LKCF…FTFF, LWIK…LLYS, LFSQ…FIVV, GISY…MVPG, QTAA…ATFY, LFLL…KMFL, and FDYI…MFFV.

The protein belongs to the UppP family.

The protein resides in the cell inner membrane. It carries out the reaction di-trans,octa-cis-undecaprenyl diphosphate + H2O = di-trans,octa-cis-undecaprenyl phosphate + phosphate + H(+). Catalyzes the dephosphorylation of undecaprenyl diphosphate (UPP). Confers resistance to bacitracin. This is Undecaprenyl-diphosphatase from Campylobacter hominis (strain ATCC BAA-381 / DSM 21671 / CCUG 45161 / LMG 19568 / NCTC 13146 / CH001A).